Consider the following 200-residue polypeptide: Chromophore lyase CpcT/CpeT 2 (200 aa).

It belongs to the CpcT/CpeT biliprotein lyase family.

Functionally, covalently attaches a chromophore to Cys residue(s) of phycobiliproteins. This is Chromophore lyase CpcT/CpeT 2 from Microcystis aeruginosa (strain NIES-843 / IAM M-2473).